A 514-amino-acid chain; its full sequence is Na(+)/H(+) antiporter NhaB (514 aa).

The next 12 membrane-spanning stretches (helical) occupy residues 23 to 43, 52 to 72, 97 to 117, 120 to 140, 144 to 164, 202 to 222, 238 to 258, 303 to 323, 357 to 377, 391 to 411, 447 to 467, and 475 to 495; these read LALL…SFVA, IFTL…LLAI, LLLM…LFIF, LLLS…AAAF, FLDA…FYGI, LMMH…VGEP, FFLR…LTCM, AIIG…VGLI, LTVF…APII, LFYL…VGTI, ATPN…APLI, and VWMA…CVEF.

The protein belongs to the NhaB Na(+)/H(+) (TC 2.A.34) antiporter family.

The protein localises to the cell inner membrane. It carries out the reaction 2 Na(+)(in) + 3 H(+)(out) = 2 Na(+)(out) + 3 H(+)(in). In terms of biological role, na(+)/H(+) antiporter that extrudes sodium in exchange for external protons. The protein is Na(+)/H(+) antiporter NhaB of Salmonella arizonae (strain ATCC BAA-731 / CDC346-86 / RSK2980).